An 87-amino-acid polypeptide reads, in one-letter code: MQKELKQEIINKFKLHETDTGSPEVQIALLTERINHLTEHLKVHKKDYHSRRGLLKMVGHRRGLLNYLMKTDIARYRAIVEKLNLRK.

The protein belongs to the universal ribosomal protein uS15 family. Part of the 30S ribosomal subunit. Forms a bridge to the 50S subunit in the 70S ribosome, contacting the 23S rRNA.

In terms of biological role, one of the primary rRNA binding proteins, it binds directly to 16S rRNA where it helps nucleate assembly of the platform of the 30S subunit by binding and bridging several RNA helices of the 16S rRNA. Forms an intersubunit bridge (bridge B4) with the 23S rRNA of the 50S subunit in the ribosome. The protein is Small ribosomal subunit protein uS15 of Acetivibrio thermocellus (strain ATCC 27405 / DSM 1237 / JCM 9322 / NBRC 103400 / NCIMB 10682 / NRRL B-4536 / VPI 7372) (Clostridium thermocellum).